The sequence spans 120 residues: MYDPAEKYFNCTDIQRAFFEAGIKLGAIFHQYTGIPVNSENASMAEEFIERSTMIQPFVENVRISINNVKRSSGTYSYSSLNEKMLHAEVLINYNGKKVLGVLNYDEGLDYPVMYAKEVL.

2 residues coordinate substrate: E20 and M114.

It belongs to the archaeal dihydroneopterin aldolase family. As to quaternary structure, homotetramer.

The enzyme catalyses 7,8-dihydroneopterin = 6-hydroxymethyl-7,8-dihydropterin + glycolaldehyde. Functionally, catalyzes the conversion of 7,8-dihydroneopterin (H2Neo) to 6-hydroxymethyl-7,8-dihydropterin (6-HMD). This chain is Dihydroneopterin aldolase, found in Picrophilus torridus (strain ATCC 700027 / DSM 9790 / JCM 10055 / NBRC 100828 / KAW 2/3).